Reading from the N-terminus, the 192-residue chain is Ion-translocating oxidoreductase complex subunit A (192 aa).

The next 6 membrane-spanning stretches (helical) occupy residues 5 to 25 (FLLF…FLGL), 39 to 59 (VGMS…SYIV), 63 to 83 (ILLP…VIAV), 102 to 122 (LLGI…LALL), 134 to 154 (IIYG…FSSM), and 171 to 191 (SIAM…TGLI).

This sequence belongs to the NqrDE/RnfAE family. As to quaternary structure, the complex is composed of six subunits: RnfA, RnfB, RnfC, RnfD, RnfE and RnfG.

The protein resides in the cell inner membrane. In terms of biological role, part of a membrane-bound complex that couples electron transfer with translocation of ions across the membrane. The protein is Ion-translocating oxidoreductase complex subunit A of Psychromonas ingrahamii (strain DSM 17664 / CCUG 51855 / 37).